Reading from the N-terminus, the 1700-residue chain is uncharacterized protein (1700 aa).

The chain crosses the membrane as a helical span at residues 986 to 1006 (APITQYPVLCYLLYLLSYYLV). Coiled-coil stretches lie at residues 1246–1278 (DQNA…REIK) and 1657–1684 (QDMD…IEGD). Residues 1650 to 1700 (DTEPDIMQDMDGEPQEADELEDLKEEAESLDIEGDYFAEEDEDYAQEDFIE) form a disordered region. Positions 1651-1700 (TEPDIMQDMDGEPQEADELEDLKEEAESLDIEGDYFAEEDEDYAQEDFIE) are enriched in acidic residues.

Its subcellular location is the host membrane. The protein localises to the virion. This is an uncharacterized protein from Acanthamoeba polyphaga (Amoeba).